The chain runs to 121 residues: Thioredoxin-like protein (121 aa).

The 111-residue stretch at 2-112 (VHHITSNDEL…LGAAAEKLGG (111 aa)) folds into the Thioredoxin domain. C30 and C33 are disulfide-bonded.

It belongs to the thioredoxin family.

In terms of biological role, participates in various redox reactions through the reversible oxidation of its active center dithiol to a disulfide and catalyzes dithiol-disulfide exchange reactions. The protein is Thioredoxin-like protein of Fusarium culmorum.